The chain runs to 513 residues: Putative ATP-dependent RNA helicase QP509L (513 aa).

Residues 110-262 enclose the Helicase ATP-binding domain; that stretch reads KKLLSPYGRF…KIIIHHLGQP (153 aa). 123-130 contacts ATP; sequence LNTGLGKT. The DEAH box signature appears at 215–218; sequence DEAH.

This sequence belongs to the DEAD box helicase family. DEAH subfamily.

It catalyses the reaction ATP + H2O = ADP + phosphate + H(+). The polypeptide is Putative ATP-dependent RNA helicase QP509L (Ornithodoros (relapsing fever ticks)).